Consider the following 1047-residue polypeptide: Rab11 family-interacting protein 3 (1047 aa).

3 disordered regions span residues 1-107 (MELC…WPQE), 311-335 (SHSCPQEADTGCLSAKEPEEPDVSH), and 475-496 (PGPPSDPGPALSLPSEPGTAQE). Basic and acidic residues predominate over residues 64 to 73 (EPHAPSRWAK). EF-hand domains are found at residues 496–531 (EEGARLRAVFDALDRDGDGFVRIEDFIQFATVYGAE) and 528–563 (YGAEQVKDLTQYLDPSGLGVISFEDFYQGIVAIRNG). Ca(2+) contacts are provided by Asp-509, Asp-511, Asp-513, Asp-520, Asp-541, Ser-543, and Asp-552. Residues Ser-641, Ser-765, and Ser-829 each carry the phosphoserine modification. Positions 750–985 (EEDIADKVIF…NGQIITLSIQ (236 aa)) form a coiled coil. The ARF-binding domain (ABD) stretch occupies residues 775–879 (GEQHGRLRQE…MLDEIEELTQ (105 aa)). The tract at residues 882–906 (SEEQENKRKMGDRLSHERHQFQRDK) is disordered. Ser-938 and Ser-939 each carry phosphoserine. Residues 985–1047 (QGAKSLFSTS…ETNPSILEVK (63 aa)) form the FIP-RBD domain.

As to quaternary structure, homodimer. Interacts with RAB11A; the interaction is direct and is required for the recruitment to endosomes. Interacts with RAB11B. Forms a ternary complex with RAB11A and dynein intermediate chain DYNC1LI1; RAB11FIP3 links RAB11A to dynein and the interaction regulates endocytic trafficking. Interacts with dynein intermediate chain and dynactin (DCTN1); the interaction activates dynein processivity. Interacts with ARF6 and EXOC7; the interaction serves for recruitment and tethering of recycling endosomes-derived vesicles to the cleavage furrow/midbody. Interacts with RACGAP1/MgcRacGAP; the interaction occurs at late telophase and is required for recruitment and tethering of recycling endosomes-derived vesicles to the cleavage furrow/midbody. Forms a complex with RAB11A and Rabin8/RAB3IP, probably a heterohexamer with two of each protein subunit, where RAB3IP and RAB11FIP3 simultaneously bind to RAB11A; the complex promotes preciliary trafficking. Forms a complex containing RAB11A, ASAP1, RAB3IP, RAP11FIP3 and ARF4; the complex promotes preciliary trafficking; the complex binds to RHO in photoreceptor cells and promotes RHO ciliary transport. Interacts with RAB11FIP4. Interacts with RAB25.

The protein localises to the recycling endosome membrane. The protein resides in the cytoplasm. It is found in the cytoskeleton. Its subcellular location is the microtubule organizing center. It localises to the centrosome. The protein localises to the cleavage furrow. The protein resides in the midbody. It is found in the golgi apparatus membrane. Its subcellular location is the golgi apparatus. It localises to the trans-Golgi network membrane. Downstream effector molecule for Rab11 GTPase which is involved in endocytic trafficking, cytokinesis and intracellular ciliogenesis by participating in membrane delivery. Recruited by Rab11 to endosomes where it links Rab11 to dynein motor complex. The functional Rab11-RAB11FIP3-dynein complex regulates the movement of peripheral sorting endosomes (SE) along microtubule tracks toward the microtubule organizing center/centrosome, generating the endocytic recycling compartment (ERC) during interphase of cell cycle. Facilitates the interaction between dynein and dynactin and activates dynein processivity. Binding with ASAP1 is needed to regulate the pericentrosomal localization of recycling endosomes. The Rab11-RAB11FIP3 complex is also implicated in the transport during telophase of vesicles derived from recycling endosomes to the cleavage furrow via centrosome-anchored microtubules, where the vesicles function to deliver membrane during late cytokinesis and abscission. The recruitment of Rab11-RAB11FIP3-containing endosomes to the cleavage furrow and tethering to the midbody is co-mediated by RAB11FIP3 interaction with ARF6-exocyst and RACGAP1-MKLP1 tethering complexes. Also involved in the Rab11-Rabin8-Rab8 ciliogenesis cascade by facilitating the orderly assembly of a ciliary targeting complex containing Rab11, ASAP1, Rabin8/RAB3IP, RAB11FIP3 and ARF4, which directs preciliary vesicle trafficking to mother centriole and ciliogenesis initiation. Also promotes the activity of Rab11 and ASAP1 in the ARF4-dependent Golgi-to-cilia transport of the sensory receptor rhodopsin. Competes with WDR44 for binding to Rab11, which controls intracellular ciliogenesis pathway. May play a role in breast cancer cell motility by regulating actin cytoskeleton. The chain is Rab11 family-interacting protein 3 from Mus musculus (Mouse).